A 488-amino-acid chain; its full sequence is Cobyric acid synthase (488 aa).

Residues 255–442 (ALKIAVPVLP…LHGLFGSDAY (188 aa)) enclose the GATase cobBQ-type domain. Cysteine 337 (nucleophile) is an active-site residue. Histidine 434 is an active-site residue.

The protein belongs to the CobB/CobQ family. CobQ subfamily.

It functions in the pathway cofactor biosynthesis; adenosylcobalamin biosynthesis. Catalyzes amidations at positions B, D, E, and G on adenosylcobyrinic A,C-diamide. NH(2) groups are provided by glutamine, and one molecule of ATP is hydrogenolyzed for each amidation. This Rhizobium johnstonii (strain DSM 114642 / LMG 32736 / 3841) (Rhizobium leguminosarum bv. viciae) protein is Cobyric acid synthase.